The following is a 367-amino-acid chain: 2,6-dihydropseudooxynicotine hydrolase (367 aa).

Catalysis depends on residues Glu148, Ser217, Asp300, and His329.

This sequence belongs to the AB hydrolase superfamily. As to quaternary structure, homodimer.

The catalysed reaction is 2,6-dihydroxypseudooxynicotine + H2O = 2,6-dihydroxypyridine + 4-(methylamino)butanoate + H(+). It functions in the pathway alkaloid degradation; nicotine degradation; 2,6-dihydroxypyridine and 4-(methylamino)butanoate from 6-hydroxypseudooxynicotine: step 2/2. L-nicotine is used as a growth substrate. Plays a role in nicotine catabolism by cleaving a C-C bond in 2,6-dihydroxypseudooxynicotine. The polypeptide is 2,6-dihydropseudooxynicotine hydrolase (Paenarthrobacter nicotinovorans (Arthrobacter nicotinovorans)).